Here is a 109-residue protein sequence, read N- to C-terminus: Ubiquitin-related modifier 1 homolog (109 aa).

Position 109 is a 1-thioglycine (Gly109). A Glycyl lysine isopeptide (Gly-Lys) (interchain with K-? in acceptor proteins) cross-link involves residue Gly109.

This sequence belongs to the URM1 family. C-terminal thiocarboxylation occurs in 2 steps, it is first acyl-adenylated (-COAMP) via the hesA/moeB/thiF part of the MOCS3 homolog, then thiocarboxylated (-COSH) via the rhodanese domain of the MOCS3 homolog.

The protein resides in the cytoplasm. Its pathway is tRNA modification; 5-methoxycarbonylmethyl-2-thiouridine-tRNA biosynthesis. Its function is as follows. Acts as a sulfur carrier required for 2-thiolation of mcm(5)S(2)U at tRNA wobble positions of cytosolic tRNA(Lys), tRNA(Glu) and tRNA(Gln). Serves as sulfur donor in tRNA 2-thiolation reaction by being thiocarboxylated (-COSH) at its C-terminus by MOCS3. The sulfur is then transferred to tRNA to form 2-thiolation of mcm(5)S(2)U. Also acts as a ubiquitin-like protein (UBL) that is covalently conjugated via an isopeptide bond to lysine residues of target proteins. The thiocarboxylated form serves as substrate for conjugation and oxidative stress specifically induces the formation of UBL-protein conjugates. This is Ubiquitin-related modifier 1 homolog from Anopheles gambiae (African malaria mosquito).